Consider the following 920-residue polypeptide: MSFKNLQQLLKEAAAQERCGRVICYSSGNLQNPTSRSYHELMQEAQRASWALRTATCARHGSAVLLHFDSHWDSILWFWATLLAGCVPVMSTALPNNTSLRTAHLEHLSRTLNGPLCLTRARMAPEFSEQTCIEPIAVETFDMQTSSKEDHVDSAPDDTAVMMLTSGSTGRPKAVCLTHGQILSSIVNKLSVVPLRGPFMNWIRLDHVAALTEIHLPAILSNKDQVHVQSADLLANPVEFIRLASEHRVAKTFAPNFFLATLRDALCATQHDSPKWDLSGLYIFSGGEGNVTRTCDEISKLLGRYGAPPNVIVPGFGMTETCAGAINNTSCPWYDIERTSDFASLGTCMSCIRMRITDDSGGNTCVSPGETGNLEVTGSAVFKEYFNNPSATADAFTSDGWFKTGDRGLIDTNGYLHLAGRLKETMIINGVKYSPHEIESVLDESNIPGLTPSYNCCFCSFPPGAETEVICLVYLPTYPEEDIRARIQTTDAISKCIVMLTGSRPVIIPLDKGLLQKSALGKLSRSSIKASYEKGEYKAYQDTNSHLVKMYRQAMRTPPKDELERSLLAIFVDSLELSEEEFDVQTPVFDLGITSIDLIRLKKSIEEQRDIDQEIPMTTLMANTTVRELSAALHDLQAPGTYKPVITLQNEGSKTPLWLIHPGVGEVLVFLNLAKYIKDRPVYALRARGFGAHETPFASIEETVRTYYAAIKAKQPRGPYAVAGYSYGTMLAFEVSKQLEQGGDTVGFVGSFNLPPHIKTRMRQLDFTECLLHLAYFLALMSEQRAGELAAAFAGVQPSQERVLDEVMQNADPVRLAELQLSRQYLLQWANLAFALQSMAVDYDPSGSVARMDVFYCVPLAVAAASKQRWREEHLSQWRDFTRSEPRFHDVGGAHYTMLAPEHVFGFQKTLRGALEARGI.

Residues 13-428 (AAAQERCGRV…AGRLKETMII (416 aa)) form an adenylation (A) domain region. The Carrier domain maps to 558 to 637 (PPKDELERSL…ELSAALHDLQ (80 aa)). The residue at position 595 (serine 595) is an O-(pantetheine 4'-phosphoryl)serine. The thioesterase (TE) domain stretch occupies residues 656 to 905 (PLWLIHPGVG…YTMLAPEHVF (250 aa)).

The protein belongs to the NRP synthetase family.

It carries out the reaction 2 3-(4-hydroxyphenyl)pyruvate + 2 ATP = atromentin + 2 AMP + 2 diphosphate + H(+). In terms of biological role, nonribosomal peptide synthetase that mediates the biosynthesis of atromentin. AtrA first activates 4-hydroxyphenylpyruvate (HPPA) through its A domain to AMP-HPPA. The HPPA unit is then loaded to the T domain and eventually transferred to the TE domain. Another HPPA unit is then loaded onto the T domain. The TE domain then catalyzes the condensation of the two HPPA units and the release of atromentin via cyclization. This Aspergillus terreus (strain NIH 2624 / FGSC A1156) protein is Nonribosomal peptide synthetase atrA.